A 225-amino-acid chain; its full sequence is Glycerol-3-phosphate acyltransferase (225 aa).

6 consecutive transmembrane segments (helical) span residues 1 to 21, 56 to 76, 95 to 115, 134 to 154, 159 to 178, and 182 to 201; these read MAIWLLCNGVLLIVAYFLGSF, GPGLATLGVDICKGAGAVALV, IGLWLSLVVIMAGLMAILGHS, VLLVMSWTVGLAALGIFALVV, IVSLSSISAAISLPVLMFVA, and LAYVLFSITAGVYVVWRHWA.

Belongs to the PlsY family. In terms of assembly, probably interacts with PlsX.

It is found in the cell inner membrane. It catalyses the reaction an acyl phosphate + sn-glycerol 3-phosphate = a 1-acyl-sn-glycero-3-phosphate + phosphate. It functions in the pathway lipid metabolism; phospholipid metabolism. In terms of biological role, catalyzes the transfer of an acyl group from acyl-phosphate (acyl-PO(4)) to glycerol-3-phosphate (G3P) to form lysophosphatidic acid (LPA). This enzyme utilizes acyl-phosphate as fatty acyl donor, but not acyl-CoA or acyl-ACP. This chain is Glycerol-3-phosphate acyltransferase, found in Acaryochloris marina (strain MBIC 11017).